We begin with the raw amino-acid sequence, 464 residues long: Argininosuccinate lyase (464 aa).

The protein belongs to the lyase 1 family. Argininosuccinate lyase subfamily.

It localises to the cytoplasm. It carries out the reaction 2-(N(omega)-L-arginino)succinate = fumarate + L-arginine. The protein operates within amino-acid biosynthesis; L-arginine biosynthesis; L-arginine from L-ornithine and carbamoyl phosphate: step 3/3. Its activity is regulated as follows. Strongly inhibited by L-arginine. Inhibitory effects are lowered at pH 7.0 compared to those at pH 8.0. At 37 degrees Celsius and pH 7.5, activity decreases to 73% and 31% in the presence of 1 mM and 10 mM arginine, respectively. Activity also decreases to 84%, 93%, 82% and 85% in the presence of 10 mM sodium citrate, citrulline, asparatate and glutamate, respectively. Activity decreases to 96% in presence of 1 mM L-lysine. Its function is as follows. Catalyzes the last step of arginine biosynthesis, the conversion of argininosuccinate into L-arginine and fumarate. This is Argininosuccinate lyase from Arthrospira platensis (strain NIES-39 / UTEX 3086 / IAM M-135) (Spirulina platensis).